The following is a 248-amino-acid chain: Protein maestro (248 aa).

A disordered region spans residues 1 to 20 (MDQRQRRILGQPLSIPTSQP). 2 HEAT repeats span residues 44–79 (EPLK…AREA) and 128–163 (SFFI…AAFA).

It localises to the nucleus. The protein localises to the nucleolus. This is Protein maestro (MRO) from Macaca fascicularis (Crab-eating macaque).